Reading from the N-terminus, the 434-residue chain is Forkhead box protein A2-A (434 aa).

The fork-head DNA-binding region spans 149-243 (KPPYSYISLI…ENGCYLRRQK (95 aa)). The span at 249–262 (KKPSLREGGGKKLS) shows a compositional bias: basic and acidic residues. 2 disordered regions span residues 249–339 (KKPS…QSHL) and 408–434 (SGLE…MNSS). Low complexity-rich tracts occupy residues 263 to 291 (EGAS…SSSP) and 317 to 333 (ASQA…VLSH). Over residues 408-422 (SGLESSPITSDTSYY) the composition is skewed to polar residues.

At gastrula stage, expressed in both the anterior and posterior endoderm, with endodermal expression persisting into early tailbud stages. Expression is absent in gastrula stage ectoderm. During tailbud stages, expressed in the pharyngeal region, the neural floor plate, the midbrain, hindbrain and in cranial neural crest cells. Expressed in the foregut of hatching larvae. In tadpoles, expressed in the pharyngeal pouches and in other anterior endodermal regions. Within the tadpole nervous system, expressed in the neural floor plate, at high levels in the ventral midbrain and hindbrain, and at lower levels in the spinal cord. Expressed in the adult lung and brain.

Its subcellular location is the nucleus. Acts as a transcriptional activator during early development, limiting the extent of mesoderm formation in the gastrula. Binds to DNA via the target sequence 5'-GT[AC]AACA-3', with 5'-GTAAACA-3' being the preferred binding site. The protein is Forkhead box protein A2-A (foxa2-a) of Xenopus laevis (African clawed frog).